Here is a 308-residue protein sequence, read N- to C-terminus: HTH-type transcriptional activator AllS (308 aa).

In terms of domain architecture, HTH lysR-type spans 2–59; it reads FDPETLRTFIAVAETGSFSKAAERLCKTTATISYRIKLLEENTGVALFFRTTRSVTLT. The H-T-H motif DNA-binding region spans 19–38; the sequence is FSKAAERLCKTTATISYRIK.

This sequence belongs to the LysR transcriptional regulatory family.

In terms of biological role, positive regulator essential for the expression of allD operon. Binds to the allD promoter. In Escherichia coli O6:K15:H31 (strain 536 / UPEC), this protein is HTH-type transcriptional activator AllS (allS).